The chain runs to 147 residues: Large ribosomal subunit protein bL9 (147 aa).

It belongs to the bacterial ribosomal protein bL9 family.

Its function is as follows. Binds to the 23S rRNA. This is Large ribosomal subunit protein bL9 from Clostridium tetani (strain Massachusetts / E88).